Here is a 617-residue protein sequence, read N- to C-terminus: COMPASS component cclA (617 aa).

2 stretches are compositionally biased toward low complexity: residues 1–19 and 40–50; these read MASIQPAGSSAPSSNINSP and SSPAPASNASA. The segment at 1–89 is disordered; that stretch reads MASIQPAGSS…AKKRATAVQN (89 aa). A compositionally biased stretch (basic residues) spans 57–69; sequence SKRNKRDSRKKRE. Positions 157–380 constitute a B30.2/SPRY domain; the sequence is IADTSFPHIK…YAFNLKETPT (224 aa). Residues 595–617 are disordered; it reads TPNTEEPAARPENITVGHDVEMS.

Belongs to the cclA family. Component of the COMPASS complex.

The protein localises to the nucleus. It localises to the chromosome. The protein resides in the telomere. Its function is as follows. Component of the COMPASS (Set1C) complex that specifically mono-, di- and trimethylates histone H3 to form H3K4me1/2/3, which subsequently plays a role in telomere length maintenance and transcription elongation regulation. Controls the production of several secondary metabolites, including astellolides. This chain is COMPASS component cclA, found in Aspergillus oryzae (strain ATCC 42149 / RIB 40) (Yellow koji mold).